Reading from the N-terminus, the 320-residue chain is Cytochrome c1-1, heme protein, mitochondrial (320 aa).

The N-terminal 77 residues, methionine 1–serine 77, are a transit peptide targeting the mitochondrion. The Mitochondrial intermembrane portion of the chain corresponds to aspartate 78–arginine 280. One can recognise a Cytochrome c domain in the interval alanine 103 to leucine 210. Positions 116, 119, 120, and 239 each coordinate heme c. Residues lysine 281–tyrosine 301 traverse the membrane as a helical segment. Topologically, residues arginine 302–asparagine 320 are mitochondrial matrix.

This sequence belongs to the cytochrome c family. Component of the ubiquinol-cytochrome c oxidoreductase (cytochrome b-c1 complex, complex III, CIII), a multisubunit enzyme composed of 3 respiratory subunits cytochrome b, cytochrome c1 and Rieske protein, 2 core protein subunits, and additional low-molecular weight protein subunits. The complex exists as an obligatory dimer and forms supercomplexes (SCs) in the inner mitochondrial membrane with cytochrome c oxidase (complex IV, CIV). It depends on heme c as a cofactor. In terms of tissue distribution, in all tissues analyzed.

It localises to the mitochondrion inner membrane. The enzyme catalyses a quinol + 2 Fe(III)-[cytochrome c](out) = a quinone + 2 Fe(II)-[cytochrome c](out) + 2 H(+)(out). Functionally, component of the ubiquinol-cytochrome c oxidoreductase, a multisubunit transmembrane complex that is part of the mitochondrial electron transport chain which drives oxidative phosphorylation. The respiratory chain contains 3 multisubunit complexes succinate dehydrogenase (complex II, CII), ubiquinol-cytochrome c oxidoreductase (cytochrome b-c1 complex, complex III, CIII) and cytochrome c oxidase (complex IV, CIV), that cooperate to transfer electrons derived from NADH and succinate to molecular oxygen, creating an electrochemical gradient over the inner membrane that drives transmembrane transport and the ATP synthase. The cytochrome b-c1 complex catalyzes electron transfer from ubiquinol to cytochrome c, linking this redox reaction to translocation of protons across the mitochondrial inner membrane, with protons being carried across the membrane as hydrogens on the quinol. In the process called Q cycle, 2 protons are consumed from the matrix, 4 protons are released into the intermembrane space and 2 electrons are passed to cytochrome c. Cytochrome c1 is a catalytic core subunit containing a c-type heme. It transfers electrons from the [2Fe-2S] iron-sulfur cluster of the Rieske protein to cytochrome c. This Solanum tuberosum (Potato) protein is Cytochrome c1-1, heme protein, mitochondrial (CYCL).